The primary structure comprises 597 residues: Aspartate--tRNA ligase (597 aa).

Glu-171 contributes to the L-aspartate binding site. Positions 195 to 198 (QLFK) are aspartate. An L-aspartate-binding site is contributed by Arg-217. ATP contacts are provided by residues 217–219 (RDE) and Gln-226. Residue His-448 participates in L-aspartate binding. An ATP-binding site is contributed by Glu-482. Arg-489 contributes to the L-aspartate binding site. 534–537 (GLDR) is an ATP binding site.

The protein belongs to the class-II aminoacyl-tRNA synthetase family. Type 1 subfamily. Homodimer.

The protein localises to the cytoplasm. It catalyses the reaction tRNA(Asp) + L-aspartate + ATP = L-aspartyl-tRNA(Asp) + AMP + diphosphate. Functionally, catalyzes the attachment of L-aspartate to tRNA(Asp) in a two-step reaction: L-aspartate is first activated by ATP to form Asp-AMP and then transferred to the acceptor end of tRNA(Asp). This Photobacterium profundum (strain SS9) protein is Aspartate--tRNA ligase.